We begin with the raw amino-acid sequence, 334 residues long: Holliday junction branch migration complex subunit RuvB (334 aa).

The interval 1-182 (MDERLVSSEA…FGVMSRLEYY (182 aa)) is large ATPase domain (RuvB-L). Residues leucine 21, arginine 22, glycine 63, lysine 66, threonine 67, threonine 68, 129–131 (EDF), arginine 172, tyrosine 182, and arginine 219 each bind ATP. Threonine 67 is a binding site for Mg(2+). Positions 183–253 (TQEELADIVT…ISQNALERLQ (71 aa)) are small ATPAse domain (RuvB-S). The tract at residues 256-334 (RLGLDHIDHK…HFQMEAPRYD (79 aa)) is head domain (RuvB-H). DNA contacts are provided by arginine 311 and arginine 316.

It belongs to the RuvB family. As to quaternary structure, homohexamer. Forms an RuvA(8)-RuvB(12)-Holliday junction (HJ) complex. HJ DNA is sandwiched between 2 RuvA tetramers; dsDNA enters through RuvA and exits via RuvB. An RuvB hexamer assembles on each DNA strand where it exits the tetramer. Each RuvB hexamer is contacted by two RuvA subunits (via domain III) on 2 adjacent RuvB subunits; this complex drives branch migration. In the full resolvosome a probable DNA-RuvA(4)-RuvB(12)-RuvC(2) complex forms which resolves the HJ. Homohexamer which interacts with RecU.

Its subcellular location is the cytoplasm. It carries out the reaction ATP + H2O = ADP + phosphate + H(+). In terms of biological role, the RuvA-RuvB-RuvC complex processes Holliday junction (HJ) DNA during genetic recombination and DNA repair, while the RuvA-RuvB complex plays an important role in the rescue of blocked DNA replication forks via replication fork reversal (RFR). RuvA specifically binds to HJ cruciform DNA, conferring on it an open structure. The RuvB hexamer acts as an ATP-dependent pump, pulling dsDNA into and through the RuvAB complex. RuvB forms 2 homohexamers on either side of HJ DNA bound by 1 or 2 RuvA tetramers; 4 subunits per hexamer contact DNA at a time. Coordinated motions by a converter formed by DNA-disengaged RuvB subunits stimulates ATP hydrolysis and nucleotide exchange. Immobilization of the converter enables RuvB to convert the ATP-contained energy into a lever motion, pulling 2 nucleotides of DNA out of the RuvA tetramer per ATP hydrolyzed, thus driving DNA branch migration. The RuvB motors rotate together with the DNA substrate, which together with the progressing nucleotide cycle form the mechanistic basis for DNA recombination by continuous HJ branch migration. Branch migration allows RuvC to scan DNA until it finds its consensus sequence, where it cleaves and resolves cruciform DNA. The sequence is that of Holliday junction branch migration complex subunit RuvB from Bacillus subtilis (strain 168).